Here is a 567-residue protein sequence, read N- to C-terminus: Geranylgeranyl transferase type-2 subunit alpha (567 aa).

PFTA repeat units lie at residues Leu44–Thr78, Leu88–Glu122, Asn124–Val158, Pro159–Pro193, Val207–Pro241, and Val363–Pro397. Residue Ser98 is modified to Phosphoserine. LRR repeat units follow at residues Glu442–Leu463, Leu464–Arg486, Cys487–Pro508, Arg509–Ala530, and Arg534–Leu555.

The protein belongs to the protein prenyltransferase subunit alpha family. As to quaternary structure, heterotrimer composed of RABGGTA, RABGGTB and CHM; within this trimer, RABGGTA and RABGGTB form the catalytic component B, while CHM (component A) mediates peptide substrate binding. The Rab GGTase dimer (RGGT) interacts with CHM (component A) prior to Rab protein binding; the association is stabilized by geranylgeranyl pyrophosphate (GGpp). The CHM:RGGT:Rab complex is destabilized by GGpp. Interacts with non-phosphorylated form of RAB8A; phosphorylation of RAB8A at 'Thr-72' disrupts this interaction.

The enzyme catalyses geranylgeranyl diphosphate + L-cysteinyl-[protein] = S-geranylgeranyl-L-cysteinyl-[protein] + diphosphate. With respect to regulation, the enzymatic reaction requires the aid of a Rab escort protein (also called component A), such as CHM. Its function is as follows. Catalyzes the transfer of a geranylgeranyl moiety from geranylgeranyl diphosphate to both cysteines of Rab proteins with the C-terminal sequence -XXCC, -XCXC and -CCXX, such as RAB1A, RAB3A, RAB5A and RAB7A. This is Geranylgeranyl transferase type-2 subunit alpha (RABGGTA) from Homo sapiens (Human).